A 146-amino-acid polypeptide reads, in one-letter code: GFLTAEEKSLVNDLWSKVNVDEVGGEALGRLLVVYPWTQRFFQSFGDLSSADAIMGNGKVKAHGKKVLNSFSDGLKHIDDLKGTFAKLSELHCDKLHVDPENFKLLGNVLVCVLAHHFGNEFTPPVQAAYQKVVAGVANALAHKYH.

In terms of domain architecture, Globin spans 2–146 (FLTAEEKSLV…VANALAHKYH (145 aa)). S44 is subject to Phosphoserine. The residue at position 59 (K59) is an N6-acetyllysine. H63 provides a ligand contact to heme b. K82 bears the N6-acetyllysine mark. H92 contributes to the heme b binding site. At C93 the chain carries S-nitrosocysteine. Residue K144 is modified to N6-acetyllysine.

It belongs to the globin family. In terms of assembly, heterotetramer of two alpha chains and two beta chains. In terms of tissue distribution, red blood cells.

Functionally, involved in oxygen transport from the lung to the various peripheral tissues. In Proteles cristata (Aardwolf), this protein is Hemoglobin subunit beta (HBB).